The sequence spans 141 residues: Nucleoside diphosphate kinase (141 aa).

Residues Lys-11, Phe-59, Arg-87, Thr-93, Arg-104, and Asn-114 each contribute to the ATP site. The active-site Pros-phosphohistidine intermediate is the His-117.

It belongs to the NDK family. As to quaternary structure, homotetramer. It depends on Mg(2+) as a cofactor.

The protein localises to the cytoplasm. The enzyme catalyses a 2'-deoxyribonucleoside 5'-diphosphate + ATP = a 2'-deoxyribonucleoside 5'-triphosphate + ADP. The catalysed reaction is a ribonucleoside 5'-diphosphate + ATP = a ribonucleoside 5'-triphosphate + ADP. Functionally, major role in the synthesis of nucleoside triphosphates other than ATP. The ATP gamma phosphate is transferred to the NDP beta phosphate via a ping-pong mechanism, using a phosphorylated active-site intermediate. This Polynucleobacter asymbioticus (strain DSM 18221 / CIP 109841 / QLW-P1DMWA-1) (Polynucleobacter necessarius subsp. asymbioticus) protein is Nucleoside diphosphate kinase.